The chain runs to 408 residues: CST complex subunit STN1 (408 aa).

An interaction with CTC1 region spans residues 8–195 (MQCESSPKEE…KVYDQPFRNP (188 aa)). The segment at residues 64–165 (VDIMGAVISV…EICATIYYKV (102 aa)) is a DNA-binding region (OB). Winged helix-turn-helix (wHTH) stretches follow at residues 201-304 (EALN…YVTS) and 305-408 (KDKD…YTAF).

It belongs to the STN1 family. In terms of assembly, component of the CST complex, composed of TEN1/C17orf106, CTC1/C17orf68 and STN1; in the complex interacts directly with TEN1 and CTC1. Interacts with ACD/TPP1, POT1 and POLA1.

It localises to the nucleus. The protein resides in the chromosome. Its subcellular location is the telomere. Component of the CST complex proposed to act as a specialized replication factor promoting DNA replication under conditions of replication stress or natural replication barriers such as the telomere duplex. The CST complex binds single-stranded DNA with high affinity in a sequence-independent manner, while isolated subunits bind DNA with low affinity by themselves. Initially the CST complex has been proposed to protect telomeres from DNA degradation. However, the CST complex has been shown to be involved in several aspects of telomere replication. The CST complex inhibits telomerase and is involved in telomere length homeostasis; it is proposed to bind to newly telomerase-synthesized 3' overhangs and to terminate telomerase action implicating the association with the ACD:POT1 complex thus interfering with its telomerase stimulation activity. The CST complex is also proposed to be involved in fill-in synthesis of the telomeric C-strand probably implicating recruitment and activation of DNA polymerase alpha. The CST complex facilitates recovery from many forms of exogenous DNA damage; seems to be involved in the re-initiation of DNA replication at repaired forks and/or dormant origins. Required for efficicient replication of the duplex region of the telomere. Promotes efficient replication of lagging-strand telomeres. Promotes general replication start following replication-fork stalling implicating new origin firing. May be in involved in C-strand fill-in during late S/G2 phase independent of its role in telomere duplex replication. This Rattus norvegicus (Rat) protein is CST complex subunit STN1.